The sequence spans 157 residues: 2-C-methyl-D-erythritol 2,4-cyclodiphosphate synthase (157 aa).

The a divalent metal cation site is built by Asp-8 and His-10. 4-CDP-2-C-methyl-D-erythritol 2-phosphate contacts are provided by residues 8–10 (DVH) and 34–35 (HS). His-42 is a binding site for a divalent metal cation. Residues 56-58 (DIG), 61-65 (FPDTD), 132-135 (TTTE), Phe-139, and Arg-142 each bind 4-CDP-2-C-methyl-D-erythritol 2-phosphate.

Belongs to the IspF family. In terms of assembly, homotrimer. A divalent metal cation serves as cofactor.

It carries out the reaction 4-CDP-2-C-methyl-D-erythritol 2-phosphate = 2-C-methyl-D-erythritol 2,4-cyclic diphosphate + CMP. It participates in isoprenoid biosynthesis; isopentenyl diphosphate biosynthesis via DXP pathway; isopentenyl diphosphate from 1-deoxy-D-xylulose 5-phosphate: step 4/6. Involved in the biosynthesis of isopentenyl diphosphate (IPP) and dimethylallyl diphosphate (DMAPP), two major building blocks of isoprenoid compounds. Catalyzes the conversion of 4-diphosphocytidyl-2-C-methyl-D-erythritol 2-phosphate (CDP-ME2P) to 2-C-methyl-D-erythritol 2,4-cyclodiphosphate (ME-CPP) with a corresponding release of cytidine 5-monophosphate (CMP). The polypeptide is 2-C-methyl-D-erythritol 2,4-cyclodiphosphate synthase (Geobacter metallireducens (strain ATCC 53774 / DSM 7210 / GS-15)).